Consider the following 299-residue polypeptide: Peroxisomal biogenesis factor 19 (299 aa).

A disordered region spans residues Met-1 to Leu-63. The residue at position 2 (Ala-2) is an N-acetylalanine. The interval Ala-2–Gly-56 is docking to the peroxisome membrane and binding to PEX3. Positions Ala-2 to Met-91 are necessary for PEX19 function on peroxisome biogenesis. Residues Arg-16–Asp-27 are compositionally biased toward acidic residues. A phosphoserine mark is found at Ser-35, Ser-54, and Ser-66. Thr-236 is modified (phosphothreonine). Cys-296 bears the Cysteine methyl ester mark. The S-farnesyl cysteine moiety is linked to residue Cys-296. A propeptide spans Leu-297 to Met-299 (removed in mature form).

This sequence belongs to the peroxin-19 family. Interacts with a broad range of peroxisomal membrane proteins, including PEX3, PEX10, PEX11A, PEX11B, PEX12, PEX13, PEX14 and PEX16, PXMP2/PMP22, PXMP4/PMP24, SLC25A17/PMP34, ABCD1/ALDP, ABCD2/ALDRP, and ABCD3/PMP70. Also interacts with the tumor suppressor CDKN2A/p19ARF. In terms of tissue distribution, ubiquitous.

It localises to the cytoplasm. Its subcellular location is the peroxisome membrane. Functionally, necessary for early peroxisomal biogenesis. Acts both as a cytosolic chaperone and as an import receptor for peroxisomal membrane proteins (PMPs). Binds and stabilizes newly synthesized PMPs in the cytoplasm by interacting with their hydrophobic membrane-spanning domains, and targets them to the peroxisome membrane by binding to the integral membrane protein PEX3. Excludes CDKN2A from the nucleus and prevents its interaction with MDM2, which results in active degradation of TP53. The polypeptide is Peroxisomal biogenesis factor 19 (PEX19) (Cricetulus griseus (Chinese hamster)).